Consider the following 101-residue polypeptide: Histone H1-like protein EM6 (101 aa).

Composition is skewed to basic residues over residues 1-35 and 58-101; these read AKKRSRSRKRSASRKRSRSRKRSASKKSSKKHVRK and AKKK…RRRR. Positions 1 to 101 are disordered; sequence AKKRSRSRKR…SRTARSRRRR (101 aa). 4 consecutive repeat copies span residues 3-4, 5-6, 7-8, and 9-10. The interval 3-22 is 10 X 2 AA approximate tandem repeats of [SK]-R; the sequence is KRSRSRKRSASRKRSRSRKR. A 5; approximate repeat occupies 11-12; the sequence is SA. Tandem repeats lie at residues 13 to 14, 15 to 16, 17 to 18, 19 to 20, and 21 to 22. The tract at residues 32 to 65 is globular; that stretch reads HVRKALAAGMKNHLLAHPKGSNNFILAKKKAPRR.

In terms of tissue distribution, sperm.

The protein resides in the nucleus. The protein localises to the chromosome. This chain is Histone H1-like protein EM6, found in Ensis minor (Razor shell).